The chain runs to 424 residues: GTPase Obg (424 aa).

In terms of domain architecture, Obg spans 1–158 (MFYDQAKIYV…RNLLLELKLL (158 aa)). Residues 159 to 329 (ADVGLVGFPN…LVYAAAKALP (171 aa)) enclose the OBG-type G domain. GTP contacts are provided by residues 165–172 (GFPNVGKS), 190–194 (FTTLV), 212–215 (DIPG), 282–285 (NKMD), and 310–312 (SAA). Mg(2+)-binding residues include Ser-172 and Thr-192. In terms of domain architecture, OCT spans 347–424 (TQASAPHRFE…IAGIEFEWEE (78 aa)).

It belongs to the TRAFAC class OBG-HflX-like GTPase superfamily. OBG GTPase family. In terms of assembly, monomer. Mg(2+) serves as cofactor.

It is found in the cytoplasm. In terms of biological role, an essential GTPase which binds GTP, GDP and possibly (p)ppGpp with moderate affinity, with high nucleotide exchange rates and a fairly low GTP hydrolysis rate. Plays a role in control of the cell cycle, stress response, ribosome biogenesis and in those bacteria that undergo differentiation, in morphogenesis control. This chain is GTPase Obg, found in Desulfitobacterium hafniense (strain Y51).